Consider the following 223-residue polypeptide: Phosphoribosylformylglycinamidine synthase subunit PurQ (223 aa).

Positions 4 to 223 constitute a Glutamine amidotransferase type-1 domain; it reads FAVVVFPGTN…FKGMVEWVRS (220 aa). The active-site Nucleophile is the cysteine 85. Active-site residues include histidine 196 and glutamate 198.

As to quaternary structure, part of the FGAM synthase complex composed of 1 PurL, 1 PurQ and 2 PurS subunits.

It is found in the cytoplasm. It catalyses the reaction N(2)-formyl-N(1)-(5-phospho-beta-D-ribosyl)glycinamide + L-glutamine + ATP + H2O = 2-formamido-N(1)-(5-O-phospho-beta-D-ribosyl)acetamidine + L-glutamate + ADP + phosphate + H(+). The enzyme catalyses L-glutamine + H2O = L-glutamate + NH4(+). The protein operates within purine metabolism; IMP biosynthesis via de novo pathway; 5-amino-1-(5-phospho-D-ribosyl)imidazole from N(2)-formyl-N(1)-(5-phospho-D-ribosyl)glycinamide: step 1/2. Functionally, part of the phosphoribosylformylglycinamidine synthase complex involved in the purines biosynthetic pathway. Catalyzes the ATP-dependent conversion of formylglycinamide ribonucleotide (FGAR) and glutamine to yield formylglycinamidine ribonucleotide (FGAM) and glutamate. The FGAM synthase complex is composed of three subunits. PurQ produces an ammonia molecule by converting glutamine to glutamate. PurL transfers the ammonia molecule to FGAR to form FGAM in an ATP-dependent manner. PurS interacts with PurQ and PurL and is thought to assist in the transfer of the ammonia molecule from PurQ to PurL. This is Phosphoribosylformylglycinamidine synthase subunit PurQ from Pyrococcus furiosus (strain ATCC 43587 / DSM 3638 / JCM 8422 / Vc1).